The sequence spans 61 residues: MPIVNVKLLEGRSDEQLKNLVTEVTNAVEKTTGANKEAIQIVIEEMKASHYGVAGVRKSDQ.

The active-site Proton acceptor; via imino nitrogen is the proline 2.

This sequence belongs to the 4-oxalocrotonate tautomerase family.

This Staphylococcus saprophyticus subsp. saprophyticus (strain ATCC 15305 / DSM 20229 / NCIMB 8711 / NCTC 7292 / S-41) protein is Probable tautomerase SSP1389.